Reading from the N-terminus, the 283-residue chain is Pantothenate synthetase (283 aa).

An ATP-binding site is contributed by Met30–His37. Residue His37 is the Proton donor of the active site. Residue Gln61 participates in (R)-pantoate binding. Beta-alanine is bound at residue Gln61. Gly149–Asp152 contributes to the ATP binding site. Position 155 (Gln155) interacts with (R)-pantoate. ATP is bound at residue Leu186–Arg189.

It belongs to the pantothenate synthetase family. Homodimer.

Its subcellular location is the cytoplasm. It catalyses the reaction (R)-pantoate + beta-alanine + ATP = (R)-pantothenate + AMP + diphosphate + H(+). It participates in cofactor biosynthesis; (R)-pantothenate biosynthesis; (R)-pantothenate from (R)-pantoate and beta-alanine: step 1/1. Functionally, catalyzes the condensation of pantoate with beta-alanine in an ATP-dependent reaction via a pantoyl-adenylate intermediate. The chain is Pantothenate synthetase from Chromohalobacter salexigens (strain ATCC BAA-138 / DSM 3043 / CIP 106854 / NCIMB 13768 / 1H11).